Consider the following 1409-residue polypeptide: Protein three rows (1409 aa).

Residues V1052–Q1058 are separase cleavage-site. Disordered regions lie at residues P1260 to V1284 and D1297 to N1409. Composition is skewed to low complexity over residues S1264–S1273 and A1300–S1310.

In terms of assembly, interacts with pim and Sse. Cleavage of thr contributes to inactivation of Sse.

The protein resides in the cytoplasm. Its function is as follows. Required specifically for chromosome disjunction during all mitoses; maternally provided protein is sufficient until mitosis 14 then zygotic protein is required. Involved in formation and/or maintenance of epithelial structures: bud extension during Malpighian tubule development, and foregut and hindgut morphogenesis. This Drosophila pseudoobscura pseudoobscura (Fruit fly) protein is Protein three rows (thr).